The chain runs to 428 residues: Serine--tRNA ligase (428 aa).

231–233 (TAE) provides a ligand contact to L-serine. 262–264 (RSE) is an ATP binding site. An L-serine-binding site is contributed by Glu285. ATP is bound at residue 349–352 (EISS). Residue Ser385 coordinates L-serine.

This sequence belongs to the class-II aminoacyl-tRNA synthetase family. Type-1 seryl-tRNA synthetase subfamily. In terms of assembly, homodimer. The tRNA molecule binds across the dimer.

The protein resides in the cytoplasm. It carries out the reaction tRNA(Ser) + L-serine + ATP = L-seryl-tRNA(Ser) + AMP + diphosphate + H(+). It catalyses the reaction tRNA(Sec) + L-serine + ATP = L-seryl-tRNA(Sec) + AMP + diphosphate + H(+). The protein operates within aminoacyl-tRNA biosynthesis; selenocysteinyl-tRNA(Sec) biosynthesis; L-seryl-tRNA(Sec) from L-serine and tRNA(Sec): step 1/1. In terms of biological role, catalyzes the attachment of serine to tRNA(Ser). Is also able to aminoacylate tRNA(Sec) with serine, to form the misacylated tRNA L-seryl-tRNA(Sec), which will be further converted into selenocysteinyl-tRNA(Sec). The chain is Serine--tRNA ligase from Staphylococcus aureus (strain MW2).